Consider the following 1060-residue polypeptide: Probable serine/threonine-protein kinase MARK-A (1060 aa).

2 stretches are compositionally biased toward basic and acidic residues: residues 1–11 (METLKEEEQFR) and 23–37 (HLKE…EREQ). 2 disordered regions span residues 1-52 (METL…LQLQ) and 67-88 (NKIP…SISV). Composition is skewed to low complexity over residues 38 to 52 (QQQQ…LQLQ) and 68 to 88 (KIPS…SISV). The Protein kinase domain occupies 109–361 (YLVIKTIGRG…MEEIINHPWL (253 aa)). ATP-binding positions include 115-123 (IGRGQFGKV) and lysine 139. Aspartate 232 functions as the Proton acceptor in the catalytic mechanism. Over residues 409–475 (INNINNTMAT…TTTTNATTTT (67 aa)) the composition is skewed to low complexity. 4 disordered regions span residues 409 to 488 (INNI…NNEE), 560 to 701 (GENS…SPLC), 714 to 886 (LREK…PVHS), and 899 to 966 (DDKS…QEPR). A UBA domain is found at 488 to 528 (ELDQEIIEELVGLGFEREELCNSIRQNKYNDAASTYFLLQG). Residues 577 to 594 (TVDSPKSTNTPQYRSSNT) show a composition bias toward polar residues. 4 stretches are compositionally biased toward low complexity: residues 603 to 613 (QQQQQQQQQQQ), 620 to 637 (QQQN…NNHN), 650 to 699 (STTV…NPSP), and 720 to 760 (TTTN…TSPN). The segment covering 761-770 (LQPFSLASTA) has biased composition (polar residues). Composition is skewed to low complexity over residues 771 to 799 (NNNN…SLNS) and 811 to 831 (QQQQ…NSSS). The span at 837–846 (QRQESRKLED) shows a compositional bias: basic and acidic residues. 2 stretches are compositionally biased toward low complexity: residues 904–926 (NSSS…TNNT) and 935–965 (QNSN…QQEP). The KA1 domain maps to 1008–1057 (IECETEGVRFSIEICRLPRLSVNGLKFKRIGGSSWRYKSICKDLLSQMKL).

It belongs to the protein kinase superfamily. CAMK Ser/Thr protein kinase family. SNF1 subfamily.

The catalysed reaction is L-seryl-[protein] + ATP = O-phospho-L-seryl-[protein] + ADP + H(+). It catalyses the reaction L-threonyl-[protein] + ATP = O-phospho-L-threonyl-[protein] + ADP + H(+). In Dictyostelium discoideum (Social amoeba), this protein is Probable serine/threonine-protein kinase MARK-A (mrkA).